Reading from the N-terminus, the 137-residue chain is Large ribosomal subunit protein uL16 (137 aa).

It belongs to the universal ribosomal protein uL16 family. Part of the 50S ribosomal subunit.

Its function is as follows. Binds 23S rRNA and is also seen to make contacts with the A and possibly P site tRNAs. This is Large ribosomal subunit protein uL16 from Streptococcus thermophilus (strain CNRZ 1066).